A 426-amino-acid chain; its full sequence is Serine--tRNA ligase (426 aa).

231–233 is an L-serine binding site; sequence TAE. ATP contacts are provided by residues 262–264 and Val-278; that span reads RRE. L-serine is bound at residue Glu-285. 349–352 provides a ligand contact to ATP; the sequence is EVSS. Ser-384 is a binding site for L-serine.

This sequence belongs to the class-II aminoacyl-tRNA synthetase family. Type-1 seryl-tRNA synthetase subfamily. Homodimer. The tRNA molecule binds across the dimer.

The protein localises to the cytoplasm. It catalyses the reaction tRNA(Ser) + L-serine + ATP = L-seryl-tRNA(Ser) + AMP + diphosphate + H(+). The enzyme catalyses tRNA(Sec) + L-serine + ATP = L-seryl-tRNA(Sec) + AMP + diphosphate + H(+). It participates in aminoacyl-tRNA biosynthesis; selenocysteinyl-tRNA(Sec) biosynthesis; L-seryl-tRNA(Sec) from L-serine and tRNA(Sec): step 1/1. Catalyzes the attachment of serine to tRNA(Ser). Is also able to aminoacylate tRNA(Sec) with serine, to form the misacylated tRNA L-seryl-tRNA(Sec), which will be further converted into selenocysteinyl-tRNA(Sec). The chain is Serine--tRNA ligase from Chlamydia caviae (strain ATCC VR-813 / DSM 19441 / 03DC25 / GPIC) (Chlamydophila caviae).